The primary structure comprises 212 residues: Stringent starvation protein A (212 aa).

One can recognise a GST N-terminal domain in the interval 9–87 (SVMTLFSGPT…YLDERFPHPP (79 aa)). In terms of domain architecture, GST C-terminal spans 92–209 (YPVARGESRL…LTEAEREMRL (118 aa)).

It belongs to the GST superfamily. HSP26 family.

Forms an equimolar complex with the RNA polymerase holoenzyme (RNAP) but not with the core enzyme. In Escherichia coli O157:H7, this protein is Stringent starvation protein A (sspA).